The primary structure comprises 154 residues: Small ribosomal subunit protein bS6 (154 aa).

The interval 97-154 (DSEPSAMMQKRDRDDRKDRERGRRRDDEGFGGGGGFGGDRGDRGDRGDRGERSFGGEG) is disordered. Basic and acidic residues-rich tracts occupy residues 105–124 (QKRDRDDRKDRERGRRRDDE) and 135–154 (DRGDRGDRGDRGERSFGGEG).

It belongs to the bacterial ribosomal protein bS6 family.

Binds together with bS18 to 16S ribosomal RNA. This is Small ribosomal subunit protein bS6 from Methylobacterium radiotolerans (strain ATCC 27329 / DSM 1819 / JCM 2831 / NBRC 15690 / NCIMB 10815 / 0-1).